We begin with the raw amino-acid sequence, 554 residues long: GPI alpha-1,2-mannosyltransferase 3 (554 aa).

Asn-26 carries N-linked (GlcNAc...) asparagine glycosylation. 9 helical membrane-spanning segments follow: residues 63-83 (LLLF…TSFV), 136-156 (VQLL…VADV), 192-212 (LTNT…PLEG), 224-244 (LVAL…PLLF), 255-275 (DLIL…SLMI), 315-335 (GFPV…YLAP), 340-360 (ILLV…HKEF), 362-382 (FIYP…THLK), and 387-407 (PALS…GLVH). N-linked (GlcNAc...) asparagine glycosylation is present at Asn-427.

This sequence belongs to the glycosyltransferase 22 family. PIGB subfamily.

It localises to the endoplasmic reticulum membrane. Its pathway is glycolipid biosynthesis; glycosylphosphatidylinositol-anchor biosynthesis. Its function is as follows. Alpha-1,2-mannosyltransferase that catalyzes the transfer of the third mannose, via an alpha-1,2 bond, from a dolichol-phosphate-mannose (Dol-P-Man) to an alpha-D-Man-(1-&gt;6)-2-PEtn-alpha-D-Man-(1-&gt;4)-alpha-D-GlcN-(1-&gt;6)-(1-radyl,2-acyl-sn-glycero-3-phospho)-2-acyl-inositol intermediate to generate an alpha-D-Man-(1-&gt;2)-alpha-D-Man-(1-&gt;6)-2-PEtn-alpha-D-Man-(1-&gt;4)-alpha-D-GlcN-(1-&gt;6)-(1-radyl,2-acyl-sn-glycero-3-phospho)-2-acyl-inositol (also termed H6) and participates in the nineth step of the glycosylphosphatidylinositol-anchor biosynthesis. May also add the third mannose to an alpha-D-Man-(1-&gt;6)-alpha-D-Man-(1-&gt;4)-alpha-D-GlcN-(1-&gt;6)-(1-radyl,2-acyl-sn-glycero-3-phospho)-2-acyl-inositol (also termed H3) intermediate generating an alpha-D-Man-(1-&gt;2)-alpha-D-Man-(1-&gt;6)-alpha-D-Man-(1-&gt;4)-alpha-D-GlcN-(1-&gt;6)-(1-radyl,2-acyl-sn-glycero-3-phospho)-2-acyl-inositol (also termed H4). This chain is GPI alpha-1,2-mannosyltransferase 3, found in Homo sapiens (Human).